We begin with the raw amino-acid sequence, 39 residues long: HLFQFREMIKEMTGKEPVVSYAFYGCYCGKGGRGKPDAT.

Positions 27, 29, and 31 each coordinate Ca(2+).

The protein belongs to the phospholipase A2 family. Group II subfamily. D49 sub-subfamily. Ca(2+) serves as cofactor. Expressed by the venom gland.

The protein resides in the secreted. The enzyme catalyses a 1,2-diacyl-sn-glycero-3-phosphocholine + H2O = a 1-acyl-sn-glycero-3-phosphocholine + a fatty acid + H(+). With respect to regulation, is selectively inhibited by the gamma-phospholipase A2 inhibitor (PLI) CgMIP-I (AC P0DQP7) but not by the alpha-PLI CgMIP-II (AC P0DQP8). Its function is as follows. Snake venom phospholipase A2 (PLA2) that shows high myotoxic activities, induces mild edema, and shows cytolytic, and anti-coagulant activities, as well as intracerebral lethal effect. Does not induce lethality at a dose of 5 ug/g, when intravenously injected into mice. PLA2 catalyzes the calcium-dependent hydrolysis of the 2-acyl groups in 3-sn-phosphoglycerides. In Cerrophidion godmani (Porthidium godmani), this protein is Basic phospholipase A2.